We begin with the raw amino-acid sequence, 580 residues long: Bifunctional lycopene cyclase/phytoene synthase (580 aa).

Helical transmembrane passes span 3–23 (WEYA…LAAV), 35–55 (KLVF…SYLI), and 65–85 (GVVV…FFVI). An N-linked (GlcNAc...) asparagine glycan is attached at Asn-89. Transmembrane regions (helical) follow at residues 116–136 (IAGQ…VSSG), 139–159 (GMYM…LWSI), 171–191 (NTAL…TFAL), and 214–234 (IEEA…LIAC).

In the N-terminal section; belongs to the lycopene beta-cyclase family. The protein in the C-terminal section; belongs to the phytoene/squalene synthase family.

It is found in the membrane. It catalyses the reaction all-trans-lycopene = gamma-carotene. The enzyme catalyses gamma-carotene = all-trans-beta-carotene. It carries out the reaction 2 (2E,6E,10E)-geranylgeranyl diphosphate = 15-cis-phytoene + 2 diphosphate. Its pathway is carotenoid biosynthesis; beta-carotene biosynthesis. It participates in carotenoid biosynthesis; phytoene biosynthesis; all-trans-phytoene from geranylgeranyl diphosphate: step 1/1. Its function is as follows. Bifunctional enzyme; part of the car gene cluster that mediates the biosynthesis of neurosporaxanthin, a carboxylic apocarotenoid acting as an essential protective pigments and leading to orange pigmentation. CarAR catalyzes the first step of the pathway by converting geranylgeranyl diphosphate to phytoene, as well as the later cyclization step that transforms the carB product lycopene into gamma-carotene. CarAR also converts part of gamma-carotene into beta-carotene. Neurosporaxanthin is synthesized from geranyl-geranyl pyrophosphate (GGPP) through several enzymatic activities. Phytoene synthase activity performed by the bifunctional enzyme carAR first produces phytoene from geranyl-geranyl pyrophosphate (GGPP). The phytoene dehydrogenase carB then introduces 4 desaturations to lead to lycopene which is substrate of the carotene cyclase activity of carAR that leads to the production of gamma-carotene. CarB then performs a 5th desaturation reaction to yield torulene. Torulene is the substrate of the dioxidase carT that breaks the molecule, removing five carbon atoms to yield beta-apo-4'-carotenal, whereas the aldehyde dehydrogenase carD mediates the last step by converting beta-apo-4'-carotenal into neurosporaxanthin. In Gibberella fujikuroi (strain CBS 195.34 / IMI 58289 / NRRL A-6831) (Bakanae and foot rot disease fungus), this protein is Bifunctional lycopene cyclase/phytoene synthase.